Consider the following 445-residue polypeptide: Phosphoglucosamine mutase (445 aa).

The Phosphoserine intermediate role is filled by serine 99. Positions 99, 242, 244, and 246 each coordinate Mg(2+). Serine 99 is subject to Phosphoserine.

Belongs to the phosphohexose mutase family. It depends on Mg(2+) as a cofactor. Activated by phosphorylation.

The enzyme catalyses alpha-D-glucosamine 1-phosphate = D-glucosamine 6-phosphate. Functionally, catalyzes the conversion of glucosamine-6-phosphate to glucosamine-1-phosphate. This is Phosphoglucosamine mutase from Helicobacter acinonychis (strain Sheeba).